The chain runs to 502 residues: Lysine--tRNA ligase (502 aa).

Residues E413 and E420 each coordinate Mg(2+).

The protein belongs to the class-II aminoacyl-tRNA synthetase family. Homodimer. Mg(2+) serves as cofactor.

The protein localises to the cytoplasm. The catalysed reaction is tRNA(Lys) + L-lysine + ATP = L-lysyl-tRNA(Lys) + AMP + diphosphate. The protein is Lysine--tRNA ligase of Aromatoleum aromaticum (strain DSM 19018 / LMG 30748 / EbN1) (Azoarcus sp. (strain EbN1)).